The primary structure comprises 236 residues: Rab-like protein 3 (236 aa).

A small GTPase-like region spans residues M1–D236. Residues G16–S21, K148–D150, and D179–C180 contribute to the GTP site.

The protein belongs to the small GTPase superfamily. Rab family. Homodimer. Interacts with GPR89; the interaction stabilizes GPR89. Interacts with RAP1GDS1.

Required for KRAS signaling regulation and modulation of cell proliferation. Regulator of KRAS prenylation, and probably prenylation of other small GTPases. Required for lymphocyte development and function. Not required for myeloid cell development. The protein is Rab-like protein 3 (RABL3) of Bos taurus (Bovine).